Consider the following 382-residue polypeptide: AIAAVITFLILFTIFGNALVILAVLTSRSLRAPQNLFLVSLAAADILVATLIIPFSLANELLGYWYFRHTWCEVYLALDVLFCTSSIVHLCAISLDRYWSVSRALEYNSKRTPRRIKGIILTVWLIAAFISLPPLIYKGDKGKKPGGRPQCKLNEEAWYILSSSIGSFFAPCLIMILVYLRIYLIAKRRNRQGPHGKQAPGDGDTGPSALGGTSTISKLPPSILPAVGEANGHSKPPGEREGGEQMGDPTSPSTPPNQSSVGPEDGSQKQEEEEEEEEEEEEECGPPAPPTSSSLQGTPNFQPSQGSQVLATLRGQVLLARGPASLGLQPWRRRTQMNREKRFTFVLAVVIGVFVLCWFPFFFSYSLGAICPQHCKVPHGLF.

Residues 1-25 (AIAAVITFLILFTIFGNALVILAVL) form a helical membrane-spanning segment. The Cytoplasmic segment spans residues 26–36 (TSRSLRAPQNL). A helical membrane pass occupies residues 37-62 (FLVSLAAADILVATLIIPFSLANELL). The Extracellular portion of the chain corresponds to 63-72 (GYWYFRHTWC). Cysteines 72 and 151 form a disulfide. Residues 73 to 95 (EVYLALDVLFCTSSIVHLCAISL) form a helical membrane-spanning segment. Over 96 to 117 (DRYWSVSRALEYNSKRTPRRIK) the chain is Cytoplasmic. A helical transmembrane segment spans residues 118 to 140 (GIILTVWLIAAFISLPPLIYKGD). Residues 141 to 156 (KGKKPGGRPQCKLNEE) are Extracellular-facing. The helical transmembrane segment at 157-180 (AWYILSSSIGSFFAPCLIMILVYL) threads the bilayer. Topologically, residues 181–346 (RIYLIAKRRN…MNREKRFTFV (166 aa)) are cytoplasmic. The segment at 192-305 (QGPHGKQAPG…QGTPNFQPSQ (114 aa)) is disordered. Residues 271–284 (EEEEEEEEEEEEEC) show a composition bias toward acidic residues. A compositionally biased stretch (polar residues) spans 291–305 (TSSSLQGTPNFQPSQ). The helical transmembrane segment at 347-370 (LAVVIGVFVLCWFPFFFSYSLGAI) threads the bilayer. Residues 371–379 (CPQHCKVPH) are Extracellular-facing. A helical transmembrane segment spans residues 380 to 382 (GLF).

It belongs to the G-protein coupled receptor 1 family. Adrenergic receptor subfamily. ADRA2B sub-subfamily. Interacts with RAB26. Interacts with PPP1R9B. Interacts with GGA1, GGA2 and GGA3.

The protein resides in the cell membrane. Functionally, alpha-2 adrenergic receptors mediate the catecholamine-induced inhibition of adenylate cyclase through the action of G proteins. The protein is Alpha-2B adrenergic receptor (ADRA2B) of Didelphis virginiana (North American opossum).